Reading from the N-terminus, the 455-residue chain is Immunoglobulin alpha-2 heavy chain (455 aa).

Ig-like domains are found at residues 1–95, 121–213, 227–322, and 330–432; these read EVQL…VYYC, PKVF…QDVT, PRLS…ANIT, and PEVH…KTID. Positions 1-115 are variable (V) domain, involved in antigen recognition; sequence EVQLVETGGG…GKGTTVTVSS (115 aa). 2 disulfides stabilise this stretch: Cys22–Cys95 and Cys141–Cys200. Residues 116–455 are constant (C) domain; it reads ASPTSPKVFP…VMAEADGTCY (340 aa). Asn162, Asn207, and Asn246 each carry an N-linked (GlcNAc...) asparagine glycan. Intrachain disulfides connect Cys225–Cys282 and Cys249–Cys306. Residue Asn320 is glycosylated (N-linked (GlcNAc...) asparagine). A disulfide bridge connects residues Cys352 and Cys415. Asn442 carries an N-linked (GlcNAc...) asparagine glycan.

In terms of assembly, immunoglobulins are composed of two identical heavy chains and two identical light chains; disulfide-linked. Monomeric or polymeric.

It localises to the secreted. The protein localises to the cell membrane. Functionally, immunoglobulins, also known as antibodies, are membrane-bound or secreted glycoproteins produced by B lymphocytes. In the recognition phase of humoral immunity, the membrane-bound immunoglobulins serve as receptors which, upon binding of a specific antigen, trigger the clonal expansion and differentiation of B lymphocytes into immunoglobulins-secreting plasma cells. Secreted immunoglobulins mediate the effector phase of humoral immunity, which results in the elimination of bound antigens. The antigen binding site is formed by the variable domain of one heavy chain, together with that of its associated light chain. Thus, each immunoglobulin has two antigen binding sites with remarkable affinity for a particular antigen. The variable domains are assembled by a process called V-(D)-J rearrangement and can then be subjected to somatic hypermutations which, after exposure to antigen and selection, allow affinity maturation for a particular antigen. Ig alpha is the major immunoglobulin class in body secretions. This is Immunoglobulin alpha-2 heavy chain from Homo sapiens (Human).